An 805-amino-acid chain; its full sequence is ATP-dependent RNA helicase mak-5 (805 aa).

A compositionally biased stretch (basic residues) spans 1 to 10 (MAVDKKRKNT). Disordered regions lie at residues 1 to 33 (MAVDKKRKNTKAPASGPKRRKTQPSSKQIKRPV) and 79 to 189 (VPKS…ELET). The span at 85-100 (EVEDDGEEFGGFDDEE) shows a compositional bias: acidic residues. Basic and acidic residues-rich tracts occupy residues 110–119 (QEVKTSETKA), 126–143 (AKEKKASKDQRKPKEQQK), and 164–189 (KNAEDKKKARKNEKTTVEPKDPELET). The short motif at 209–237 (SEWVPLDLSPRMISSIAKLRFSKPTVIQS) is the Q motif element. A Helicase ATP-binding domain is found at 240–463 (IPEIMAGHDV…AGKSKFKATS (224 aa)). Residue 253 to 260 (ASTGSGKT) coordinates ATP. The short motif at 372-375 (DEAD) is the DEAD box element. Over residues 390-406 (FKALDRPPVEENNEDQK) the composition is skewed to basic and acidic residues. The interval 390–435 (FKALDRPPVEENNEDQKMGGTDEEGQEEEEEDSEEEEEEEEEHVNK) is disordered. Positions 410–431 (TDEEGQEEEEEDSEEEEEEEEE) are enriched in acidic residues. The region spanning 510–666 (YLYATLMLQP…NSGNNTKKLV (157 aa)) is the Helicase C-terminal domain. Residues 729 to 751 (AGKWGGKGSSKKQKQKEAQQMSK) form a disordered region.

Belongs to the DEAD box helicase family. DDX24/MAK5 subfamily.

The protein resides in the nucleus. The protein localises to the nucleolus. It catalyses the reaction ATP + H2O = ADP + phosphate + H(+). Its function is as follows. ATP-binding RNA helicase involved in the biogenesis of 60S ribosomal subunits and is required for the normal formation of 25S and 5.8S rRNAs. In Neurospora crassa (strain ATCC 24698 / 74-OR23-1A / CBS 708.71 / DSM 1257 / FGSC 987), this protein is ATP-dependent RNA helicase mak-5 (mak-5).